A 337-amino-acid polypeptide reads, in one-letter code: Metacaspase III c (337 aa).

2 consecutive propeptides follow at residues 1–6 (MGFLRR) and 116–125 (VPPAATGTRR). Cys202 is subject to Cysteine sulfenic acid (-SOH). A disulfide bond links Cys202 and Cys259. Residue His207 is part of the active site. Ca(2+) contacts are provided by Asp224, Asp240, and Asp241. Cys264 is an active-site residue. Asp271 is a Ca(2+) binding site. Residues 290–337 (NFDFKKLLGKFGIDDFDKFGGEALGKINGDALGKVGKDALGKLNKFFG) constitute a propeptide that is removed on maturation.

It belongs to the peptidase C14B family. In terms of processing, auto-proteolytic cleavage into a large and a small subunit which probably remain associated by non-covalent bonds. Post-translationally, following oxidative stress, the oxidation of Cys-202 leads to the formation of a disulfide bond between Cys-202 and Cys-259 which enhances catalytic activity.

With respect to regulation, activated by Ca(2+). In terms of biological role, cysteine protease that cleaves specifically after arginine residues. The protein is Metacaspase III c of Phaeodactylum tricornutum (strain CCAP 1055/1).